Reading from the N-terminus, the 430-residue chain is Enolase (430 aa).

Residue Gln166 participates in (2R)-2-phosphoglycerate binding. Glu208 serves as the catalytic Proton donor. Asp245, Glu288, and Asp315 together coordinate Mg(2+). (2R)-2-phosphoglycerate contacts are provided by Lys340, Arg369, Ser370, and Lys391. Lys340 acts as the Proton acceptor in catalysis.

This sequence belongs to the enolase family. Mg(2+) serves as cofactor.

It localises to the cytoplasm. The protein resides in the secreted. Its subcellular location is the cell surface. The enzyme catalyses (2R)-2-phosphoglycerate = phosphoenolpyruvate + H2O. It participates in carbohydrate degradation; glycolysis; pyruvate from D-glyceraldehyde 3-phosphate: step 4/5. Catalyzes the reversible conversion of 2-phosphoglycerate (2-PG) into phosphoenolpyruvate (PEP). It is essential for the degradation of carbohydrates via glycolysis. The chain is Enolase from Clostridium beijerinckii (strain ATCC 51743 / NCIMB 8052) (Clostridium acetobutylicum).